Consider the following 469-residue polypeptide: Transcription factor phomD (469 aa).

The segment at residues 14–41 is a DNA-binding region (zn(2)-C6 fungal-type); it reads CNACNESKVRCSQRKPTCARCERNGVEC. Positions 49–118 are disordered; sequence THKDAPPISM…QQKEEAAAAA (70 aa). Residues 82–93 are compositionally biased toward polar residues; it reads KANSNSSSNWHM. The segment covering 104–118 has biased composition (low complexity); the sequence is QQQQQQQKEEAAAAA.

It localises to the nucleus. In terms of biological role, transcription factor; part of the gene cluster that mediates the biosynthesis of the phomopsins, a group of hexapeptide mycotoxins which infects lupins and causes lupinosis disease in livestock. May play a role in the regulation of the production of phomopsins. This chain is Transcription factor phomD, found in Diaporthe leptostromiformis (Lupinosis disease fungus).